The following is a 423-amino-acid chain: Cytochrome b mRNA maturase bI2 (423 aa).

At 1-31 (MAFRKSNVYLSLVNSYIIDSPQPSSINYWWN) the chain is on the mitochondrial matrix side. Residues 1–143 (MAFRKSNVYL…CVYGQMSHWG (143 aa)) form a cytochrome b region. A helical transmembrane segment spans residues 32 to 52 (MGSLLGLCLVIQIVTGIFMAM). The Mitochondrial intermembrane segment spans residues 53–84 (HYSSNIELAFSSVEHIMRDVHNGYILRYLHAN). The helical transmembrane segment at 85 to 105 (GASFFFMVMFMHMAKGLYYGS) threads the bilayer. Topologically, residues 106-115 (YRSPRVTLWN) are mitochondrial matrix. A helical transmembrane segment spans residues 116–136 (VGVIIFILTIATAFLGYCCVY). Residues 137–153 (GQMSHWGNMNIASNMFN) lie on the Mitochondrial intermembrane side of the membrane. The interval 144–423 (NMNIASNMFN…SMKYKLGNYL (280 aa)) is maturase. A helical transmembrane segment spans residues 154-174 (MMKTIYMMMLMLLIYIFYTIM). Topologically, residues 175-423 (MRQMMKTKEY…SMKYKLGNYL (249 aa)) are mitochondrial matrix.

The protein in the N-terminal section; belongs to the cytochrome b family. In the C-terminal section; belongs to the LAGLIDADG endonuclease family.

The protein localises to the mitochondrion inner membrane. Its function is as follows. This protein is responsible for splicing and maturation of cytochrome b mRNA. Specifically, it may be responsible for the splicing specificity of the second intron. This Saccharomyces cerevisiae (strain ATCC 204508 / S288c) (Baker's yeast) protein is Cytochrome b mRNA maturase bI2 (BI2).